The sequence spans 95 residues: Large ribosomal subunit protein uL23 (95 aa).

The protein belongs to the universal ribosomal protein uL23 family. As to quaternary structure, part of the 50S ribosomal subunit. Contacts protein L29, and trigger factor when it is bound to the ribosome.

One of the early assembly proteins it binds 23S rRNA. One of the proteins that surrounds the polypeptide exit tunnel on the outside of the ribosome. Forms the main docking site for trigger factor binding to the ribosome. This is Large ribosomal subunit protein uL23 from Coxiella burnetii (strain CbuK_Q154) (Coxiella burnetii (strain Q154)).